Consider the following 212-residue polypeptide: IVSPPVCGNELLEVGEECDCGTPENCQNECCDAATCKLKSGSQCGHGDCCEQCKFSKSGTECRESMSECDPAEHCTGQSSECPADVFHKNGQPCLDNYGYCYNGNCPIMYHQCYALWGADVYEAEDSCFESNTKGNYYGYCRKENGIKIPCAPEDVKCGRLYCKDNSPGQNNPCKMFYSNEDEHKGMVLPGTKCGDGKVCSNGHCVDVATAY.

Residues 4-90 (PPVCGNELLE…ECPADVFHKN (87 aa)) form the Disintegrin domain. 9 cysteine pairs are disulfide-bonded: cysteine 7/cysteine 26, cysteine 18/cysteine 36, cysteine 62/cysteine 82, cysteine 69/cysteine 94, cysteine 101/cysteine 106, cysteine 113/cysteine 128, cysteine 151/cysteine 158, cysteine 163/cysteine 174, and cysteine 200/cysteine 205. The short motif at 68 to 70 (ECD) is the D/ECD-tripeptide element.

This sequence belongs to the venom metalloproteinase (M12B) family. P-III subfamily. P-IIIb sub-subfamily. Monomer. As to expression, expressed by the venom gland.

The protein localises to the secreted. Functionally, inhibits human platelet aggregation stimulated by collagen with an IC(50) of 420 nM. The sequence is that of Disintegrin-like halysetin from Gloydius halys (Chinese water mocassin).